The chain runs to 390 residues: Succinate--CoA ligase [ADP-forming] subunit beta (390 aa).

Positions 9 to 248 (KDILRKFGVS…ISEEDPFEVE (240 aa)) constitute an ATP-grasp domain. ATP is bound by residues Lys50, 57–59 (GRG), Glu103, Met106, and Glu111. Residues Asn203 and Asp217 each coordinate Mg(2+). Substrate-binding positions include Asn268 and 325–327 (GIV).

The protein belongs to the succinate/malate CoA ligase beta subunit family. As to quaternary structure, heterotetramer of two alpha and two beta subunits. Mg(2+) is required as a cofactor.

The catalysed reaction is succinate + ATP + CoA = succinyl-CoA + ADP + phosphate. The enzyme catalyses GTP + succinate + CoA = succinyl-CoA + GDP + phosphate. It participates in carbohydrate metabolism; tricarboxylic acid cycle; succinate from succinyl-CoA (ligase route): step 1/1. In terms of biological role, succinyl-CoA synthetase functions in the citric acid cycle (TCA), coupling the hydrolysis of succinyl-CoA to the synthesis of either ATP or GTP and thus represents the only step of substrate-level phosphorylation in the TCA. The beta subunit provides nucleotide specificity of the enzyme and binds the substrate succinate, while the binding sites for coenzyme A and phosphate are found in the alpha subunit. In Prosthecochloris aestuarii (strain DSM 271 / SK 413), this protein is Succinate--CoA ligase [ADP-forming] subunit beta.